We begin with the raw amino-acid sequence, 237 residues long: Concanavalin-A (237 aa).

Mn(2+)-binding residues include glutamate 8 and aspartate 10. Residues aspartate 10, tyrosine 12, asparagine 14, and aspartate 19 each coordinate Ca(2+). Position 14 (asparagine 14) interacts with a carbohydrate. Mn(2+) contacts are provided by aspartate 19 and histidine 24. A carbohydrate contacts are provided by residues 98–100 (GLY), aspartate 208, and arginine 228.

The protein belongs to the leguminous lectin family. As to quaternary structure, homotetramer. In terms of processing, concanavalin A-like lectins of the Diocleinae subtribe undergo proteolytic processing referred to as circular permutation. The propeptide is split into an N-terminal and a C-terminal part, the gamma and beta chain, respectively. These are then religated in beta-gamma order to form the mature alpha chain. The beta and gamma chains can often be detected in cell extracts. Residues 1-118 of the mature chain, as displayed here, probably constitute the beta chain in the propeptide, residues 119-237 the gamma chain.

In terms of biological role, glucose/D-mannose specific lectin. The chain is Concanavalin-A from Canavalia cathartica (Jackbean).